The primary structure comprises 290 residues: Shikimate kinase (290 aa).

81–91 (PIASGLKSSSA) lines the ATP pocket.

This sequence belongs to the GHMP kinase family. Archaeal shikimate kinase subfamily.

Its subcellular location is the cytoplasm. The catalysed reaction is shikimate + ATP = 3-phosphoshikimate + ADP + H(+). It participates in metabolic intermediate biosynthesis; chorismate biosynthesis; chorismate from D-erythrose 4-phosphate and phosphoenolpyruvate: step 5/7. In Methanocella arvoryzae (strain DSM 22066 / NBRC 105507 / MRE50), this protein is Shikimate kinase.